We begin with the raw amino-acid sequence, 427 residues long: Trigger factor (427 aa).

The 86-residue stretch at 163 to 248 (GDTVILDFEG…LHEIKTKEVP (86 aa)) folds into the PPIase FKBP-type domain.

This sequence belongs to the FKBP-type PPIase family. Tig subfamily.

Its subcellular location is the cytoplasm. It catalyses the reaction [protein]-peptidylproline (omega=180) = [protein]-peptidylproline (omega=0). In terms of biological role, involved in protein export. Acts as a chaperone by maintaining the newly synthesized protein in an open conformation. Functions as a peptidyl-prolyl cis-trans isomerase. The chain is Trigger factor from Listeria welshimeri serovar 6b (strain ATCC 35897 / DSM 20650 / CCUG 15529 / CIP 8149 / NCTC 11857 / SLCC 5334 / V8).